The sequence spans 212 residues: Pyrrolidone-carboxylate peptidase (212 aa).

Catalysis depends on residues glutamate 78, cysteine 141, and histidine 165.

This sequence belongs to the peptidase C15 family. As to quaternary structure, homotetramer.

It localises to the cytoplasm. It catalyses the reaction Release of an N-terminal pyroglutamyl group from a polypeptide, the second amino acid generally not being Pro.. Its function is as follows. Removes 5-oxoproline from various penultimate amino acid residues except L-proline. This is Pyrrolidone-carboxylate peptidase from Staphylococcus aureus (strain bovine RF122 / ET3-1).